Consider the following 463-residue polypeptide: MERDFSGSPRVIADLGRIIDRLEALGRLVRVRSEVDPRHDLAGIAARFEGGPQAVLFEKVAGHAYPVFVGLYWSRELLGALFDQPETALPQHVAASIKSWQSAPVDPLVVADGPVLEVTEAEVDLSTLPIPIHALEDGGPYFDAAVVIAKDPETGVRNASIQRFQVIGKDRLVINIDAGRHLGLYLDKAAARGEPLAFTLNVGVGPGVHFAAAAPAEAAPVETDELGIASAFHGAPLELVAGTVGPVEMVAHAMWALECEIRPGEVHAEGPFAEVTGYYARVEPRPLVRVKRIHRRRAPIFHTLLSGAEVFNSVGLLGEANVLALLRVQVPGVEDVYFSHGGCGFYHCVVKIAQKRAGWAKQAILATFAAFPPLKMVTVVDEDVDIRNGRDVEWAMTTRLDAKTGILVIENAFGHGLNPTFPNYLGTKVGFDCTRPFPHTPAFDRAKTKAMTLDGLDIVGAKR.

Belongs to the UbiD family.

This is an uncharacterized protein from Rhodospirillum rubrum.